A 486-amino-acid chain; its full sequence is V-type proton ATPase subunit B1 (486 aa).

N-acetylglycine is present on G2.

Belongs to the ATPase alpha/beta chains family. V-ATPase is a heteromultimeric enzyme composed of a peripheral catalytic V1 complex (components A to H) attached to an integral membrane V0 proton pore complex (components: a, c, c'', d and e).

The protein resides in the vacuole membrane. Non-catalytic subunit of the peripheral V1 complex of vacuolar ATPase. V-ATPase is responsible for acidifying a variety of intracellular compartments in eukaryotic cells. The protein is V-type proton ATPase subunit B1 (VHA-B1) of Arabidopsis thaliana (Mouse-ear cress).